A 1100-amino-acid chain; its full sequence is cGMP-inhibited 3',5'-cyclic phosphodiesterase 3B (1100 aa).

The segment covering M1–P11 has biased composition (basic and acidic residues). The interval M1–E28 is interaction with RAPGEF3. The segment at M1–S29 is disordered. S15 is modified (phosphoserine). The next 6 helical transmembrane spans lie at A69–A89, L110–T130, A140–W160, P170–P190, V198–L218, and L225–F245. The residue at position 273 (S273) is a Phosphoserine; by PKB/AKT1 or PKB/AKT2. Phosphoserine occurs at positions 274 and 421. Disordered stretches follow at residues R400–A423 and E570–S590. The segment covering G408–A423 has biased composition (polar residues). Residues P415–S439 form an interaction with PIK3R6 region. A compositionally biased stretch (basic and acidic residues) spans G573–E583. In terms of domain architecture, PDEase spans P627 to E1061. H713 acts as the Proton donor in catalysis. Position 713 (H713) interacts with AMP. Mg(2+)-binding residues include H717, H797, D798, and D913. Residues D798, D913, and Q964 each coordinate AMP. Residues E993 to D1024 show a composition bias toward acidic residues. The interval E993–R1033 is disordered. A coiled-coil region spans residues M1044–L1079.

It belongs to the cyclic nucleotide phosphodiesterase family. PDE3 subfamily. As to quaternary structure, homodimer. Interacts with PIK3CG; regulates PDE3B activity and thereby cAMP levels in cells. Interacts with RAPGEF3 and PIK3R6; form a signaling complex that regulates phosphatidylinositol 3-kinase gamma in angiogenesis. Interacts with ABHD15; this interaction regulates PDE3B's stability and expression and, thereby, impacts the antilipolytic action of insulin. Mg(2+) is required as a cofactor. Mn(2+) serves as cofactor. In terms of processing, phosphorylation at Ser-273 mediates insulin-induced activation of PDE3B. Abundant in adipose tissues.

Its subcellular location is the membrane. It catalyses the reaction a nucleoside 3',5'-cyclic phosphate + H2O = a nucleoside 5'-phosphate + H(+). It carries out the reaction 3',5'-cyclic AMP + H2O = AMP + H(+). The enzyme catalyses 3',5'-cyclic GMP + H2O = GMP + H(+). Its activity is regulated as follows. Inhibited by cGMP. In terms of biological role, cyclic nucleotide phosphodiesterase with a dual-specificity for the second messengers cAMP and cGMP, which are key regulators of many important physiological processes. Regulates angiogenesis by inhibiting the cAMP-dependent guanine nucleotide exchange factor RAPGEF3 and downstream phosphatidylinositol 3-kinase gamma-mediated signaling. Controls cardiac contractility by reducing cAMP concentration in cardiocytes. This Mus musculus (Mouse) protein is cGMP-inhibited 3',5'-cyclic phosphodiesterase 3B.